The primary structure comprises 483 residues: Replication factor C large subunit (483 aa).

43 to 50 lines the ATP pocket; it reads GKPGIGKT. Residues 417 to 442 are compositionally biased toward basic and acidic residues; it reads ELKKKKKEEDAKGKKARGSKKEKEPI. The disordered stretch occupies residues 417 to 483; sequence ELKKKKKEED…KSSQSTLFSF (67 aa). Over residues 448–457 the composition is skewed to polar residues; it reads SIDSFSSQEP.

This sequence belongs to the activator 1 small subunits family. RfcL subfamily. As to quaternary structure, heteromultimer composed of small subunits (RfcS) and large subunits (RfcL).

Functionally, part of the RFC clamp loader complex which loads the PCNA sliding clamp onto DNA. In Methanospirillum hungatei JF-1 (strain ATCC 27890 / DSM 864 / NBRC 100397 / JF-1), this protein is Replication factor C large subunit.